Consider the following 44-residue polypeptide: Cuticle protein CP463 (44 aa).

2 repeat units span residues 3 to 20 (LLEG…KKYL) and 27 to 44 (VLLS…NVQF).

Calcified shell.

The polypeptide is Cuticle protein CP463 (Cancer pagurus (Rock crab)).